The following is a 751-amino-acid chain: C2 domain-containing protein At1g53590 (751 aa).

Helical transmembrane passes span Glu2–Leu22 and His26–Met46. An SMP-LTD domain is found at Asp68 to Glu262. The region spanning Pro267–Leu381 is the C2 domain. Ca(2+) is bound by residues Asp298, Asp304, Asp352, Asp354, and Asp359. 2 disordered regions span residues Gln469–Leu519 and Ser572–Lys751. Positions Glu472–Asp482 are enriched in basic and acidic residues. Over residues Ser483–Asp502 the composition is skewed to polar residues. Residues Asn590–Ala611 show a composition bias toward basic and acidic residues. Basic residues predominate over residues Lys612 to Met624. Over residues Lys625 to Val634 the composition is skewed to basic and acidic residues. Positions Ser639–Ala651 are enriched in acidic residues. Basic and acidic residues-rich tracts occupy residues Lys664–Asp681 and Val703–Lys751. Residues Thr701–Lys728 are a coiled coil.

The protein belongs to the extended synaptotagmin family. It depends on Ca(2+) as a cofactor.

The protein localises to the membrane. This chain is C2 domain-containing protein At1g53590 (NTMC2T6.1), found in Arabidopsis thaliana (Mouse-ear cress).